The primary structure comprises 228 residues: UPF0758 protein CLK_2387 (228 aa).

Positions 106 to 228 (KISTPLDVSN…YVSMKEKGTI (123 aa)) constitute an MPN domain. H177, H179, and D190 together coordinate Zn(2+). A JAMM motif motif is present at residues 177–190 (HNHPSGDPTPSKED).

It belongs to the UPF0758 family.

The protein is UPF0758 protein CLK_2387 of Clostridium botulinum (strain Loch Maree / Type A3).